We begin with the raw amino-acid sequence, 261 residues long: 5'-nucleotidase SurE (261 aa).

A divalent metal cation-binding residues include Asp-10, Asp-11, Ser-41, and Asn-96.

Belongs to the SurE nucleotidase family. Requires a divalent metal cation as cofactor.

It is found in the cytoplasm. The catalysed reaction is a ribonucleoside 5'-phosphate + H2O = a ribonucleoside + phosphate. Nucleotidase that shows phosphatase activity on nucleoside 5'-monophosphates. The sequence is that of 5'-nucleotidase SurE from Methanococcoides burtonii (strain DSM 6242 / NBRC 107633 / OCM 468 / ACE-M).